Consider the following 211-residue polypeptide: 3-demethoxyubiquinol 3-hydroxylase (211 aa).

Fe cation contacts are provided by Glu-60, Glu-90, His-93, Glu-142, Glu-174, and His-177.

It belongs to the COQ7 family. Requires Fe cation as cofactor.

Its subcellular location is the cell membrane. It catalyses the reaction a 5-methoxy-2-methyl-3-(all-trans-polyprenyl)benzene-1,4-diol + AH2 + O2 = a 3-demethylubiquinol + A + H2O. It functions in the pathway cofactor biosynthesis; ubiquinone biosynthesis. Its function is as follows. Catalyzes the hydroxylation of 2-nonaprenyl-3-methyl-6-methoxy-1,4-benzoquinol during ubiquinone biosynthesis. This is 3-demethoxyubiquinol 3-hydroxylase from Francisella tularensis subsp. tularensis (strain FSC 198).